We begin with the raw amino-acid sequence, 39 residues long: Omega-actinopoditoxin-Mb1a (39 aa).

3 disulfides stabilise this stretch: C4-C19, C11-C30, and C18-C38.

In terms of processing, contains 3 disulfide bonds. Expressed by the venom gland.

The protein localises to the secreted. Functionally, potent inhibitor of insect, but not mammalian, voltage-gated calcium channels (Cav). The polypeptide is Omega-actinopoditoxin-Mb1a (Missulena bradleyi (Eastern mouse spider)).